The chain runs to 857 residues: Leucine--tRNA ligase (857 aa).

The short motif at 42-52 (PYPSGKLHMGH) is the 'HIGH' region element. Positions 620–624 (KMSKS) match the 'KMSKS' region motif. Lysine 623 is a binding site for ATP.

Belongs to the class-I aminoacyl-tRNA synthetase family.

Its subcellular location is the cytoplasm. It catalyses the reaction tRNA(Leu) + L-leucine + ATP = L-leucyl-tRNA(Leu) + AMP + diphosphate. The polypeptide is Leucine--tRNA ligase (Thiobacillus denitrificans (strain ATCC 25259 / T1)).